Consider the following 382-residue polypeptide: Bifunctional enzyme IspD/IspF (382 aa).

The 2-C-methyl-D-erythritol 4-phosphate cytidylyltransferase stretch occupies residues 1–225 (MTGKPSIAAL…AEERMAMISR (225 aa)). Positions 225–382 (RTAMGFDVHG…AVATVRVPSI (158 aa)) are 2-C-methyl-D-erythritol 2,4-cyclodiphosphate synthase. 2 residues coordinate a divalent metal cation: aspartate 231 and histidine 233. 4-CDP-2-C-methyl-D-erythritol 2-phosphate contacts are provided by residues 231 to 233 (DVH) and 257 to 258 (HS). Histidine 265 provides a ligand contact to a divalent metal cation. 4-CDP-2-C-methyl-D-erythritol 2-phosphate contacts are provided by residues 279–281 (DIG), 355–358 (TTTE), phenylalanine 362, and arginine 365.

In the N-terminal section; belongs to the IspD/TarI cytidylyltransferase family. IspD subfamily. It in the C-terminal section; belongs to the IspF family. The cofactor is a divalent metal cation.

The enzyme catalyses 2-C-methyl-D-erythritol 4-phosphate + CTP + H(+) = 4-CDP-2-C-methyl-D-erythritol + diphosphate. It carries out the reaction 4-CDP-2-C-methyl-D-erythritol 2-phosphate = 2-C-methyl-D-erythritol 2,4-cyclic diphosphate + CMP. The protein operates within isoprenoid biosynthesis; isopentenyl diphosphate biosynthesis via DXP pathway; isopentenyl diphosphate from 1-deoxy-D-xylulose 5-phosphate: step 2/6. Its pathway is isoprenoid biosynthesis; isopentenyl diphosphate biosynthesis via DXP pathway; isopentenyl diphosphate from 1-deoxy-D-xylulose 5-phosphate: step 4/6. Its function is as follows. Bifunctional enzyme that catalyzes the formation of 4-diphosphocytidyl-2-C-methyl-D-erythritol from CTP and 2-C-methyl-D-erythritol 4-phosphate (MEP) (IspD), and catalyzes the conversion of 4-diphosphocytidyl-2-C-methyl-D-erythritol 2-phosphate (CDP-ME2P) to 2-C-methyl-D-erythritol 2,4-cyclodiphosphate (ME-CPP) with a corresponding release of cytidine 5-monophosphate (CMP) (IspF). The polypeptide is Bifunctional enzyme IspD/IspF (Rhizorhabdus wittichii (strain DSM 6014 / CCUG 31198 / JCM 15750 / NBRC 105917 / EY 4224 / RW1) (Sphingomonas wittichii)).